Reading from the N-terminus, the 119-residue chain is MALKIRLRQQGRRNHVVYRLVLADVESPRDGRYIELLGWYDPHSAVNYQLKGDRIFHWLSQGAELTEKAAVLIKQGAPGVYSELMAKQAARKAAVCQKRRAYRQRRSLKRAEAAKAAAK.

It belongs to the bacterial ribosomal protein bS16 family.

The protein is Small ribosomal subunit protein bS16 of Chlamydia caviae (strain ATCC VR-813 / DSM 19441 / 03DC25 / GPIC) (Chlamydophila caviae).